The chain runs to 98 residues: DNA-directed RNA polymerase subunit Rpo11 (98 aa).

Belongs to the archaeal Rpo11/eukaryotic RPB11/RPC19 RNA polymerase subunit family. Part of the RNA polymerase complex.

It localises to the cytoplasm. It carries out the reaction RNA(n) + a ribonucleoside 5'-triphosphate = RNA(n+1) + diphosphate. Functionally, DNA-dependent RNA polymerase (RNAP) catalyzes the transcription of DNA into RNA using the four ribonucleoside triphosphates as substrates. The chain is DNA-directed RNA polymerase subunit Rpo11 from Korarchaeum cryptofilum (strain OPF8).